We begin with the raw amino-acid sequence, 81 residues long: Photosystem I iron-sulfur center (81 aa).

4Fe-4S ferredoxin-type domains are found at residues 2–31 (SHSV…MIPW) and 39–68 (IASA…VRVY). Positions 11, 14, 17, 21, 48, 51, 54, and 58 each coordinate [4Fe-4S] cluster.

The eukaryotic PSI reaction center is composed of at least 11 subunits. It depends on [4Fe-4S] cluster as a cofactor.

The protein localises to the plastid. Its subcellular location is the chloroplast thylakoid membrane. It carries out the reaction reduced [plastocyanin] + hnu + oxidized [2Fe-2S]-[ferredoxin] = oxidized [plastocyanin] + reduced [2Fe-2S]-[ferredoxin]. In terms of biological role, apoprotein for the two 4Fe-4S centers FA and FB of photosystem I (PSI); essential for photochemical activity. FB is the terminal electron acceptor of PSI, donating electrons to ferredoxin. The C-terminus interacts with PsaA/B/D and helps assemble the protein into the PSI complex. Required for binding of PsaD and PsaE to PSI. PSI is a plastocyanin-ferredoxin oxidoreductase, converting photonic excitation into a charge separation, which transfers an electron from the donor P700 chlorophyll pair to the spectroscopically characterized acceptors A0, A1, FX, FA and FB in turn. This is Photosystem I iron-sulfur center from Helianthus annuus (Common sunflower).